Reading from the N-terminus, the 865-residue chain is MGSRASNSPSFSSKAETLLPSEYKKNAVKKETIRNGKKRKLPDTESSDPEFASRRLIANETGTDAVSNGNKNDSNANNNNNNNNKKSSEVMHQACDACRKKKWKCSKTVPTCTNCLKYNLDCVYSPQVVRTPLTRAHLTEMENRVAELEQFLKELFPVWDIDRLLQQKDTYRIRELLTMGSTNTVPGLASNNIDSSLEQPVAFGTAQPAQSLSTDPAVQSQAYPMQPVPMTELQSITNLRHTPSLLDEQQMNTISTATLRNMYSSGNNNNNLGNISGLSPVTEAFFRWQEGETSIDNSYFGKGSILFWLNQLLSSEKIAGVTSKVGNDINTNNNNINHQKLPLILNNNITHNVSDITTTSTSSNKRAMSPLSANDSVYLAKRETISAYIDAYFKHYHALYPLVSKEMFFAQYNDQIKPENVEIWHILLNAVLALGSWCSNSCSSHHTLYYQNALSYLSTAVLETGSTDLTIALILLTHYVQKMHKPNTAWSLIGLCSHMATSLGLHRDLPNSTIHDQQLRRVLWWTIYCTGCDLSLETGRPSLLPNLQAIDIPLPASSATIKEPSIYSSIIQESQWSQILQQKLSNNSYQQSAGECLSWFDSVQAFLDHWPTPSTEAELKALNETQLDWLPLVKFRPYWMFHCSLISLFSVFFEEDAPTDNNVIRCKELCLQLSSRNIFSVATFVRSYAFNSLSCWYATHYLVRSALVPLHFASRISPQHALWETVKAQLLSAHEAMGILSQESSLAAKFDGILTKNYSEILQREGINKSQLMPPPTPLLQSTSFSDLLSLWSANAEDAPRVSNSQMPQSITITDSLLQSSTTQMRPPTTSGWPDTNNFLNPSTQQLFNTTTMDDVYNYIFDNDE.

Positions 1–15 (MGSRASNSPSFSSKA) are enriched in polar residues. The tract at residues 1–87 (MGSRASNSPS…NNNNNNNKKS (87 aa)) is disordered. The span at 22–34 (EYKKNAVKKETIR) shows a compositional bias: basic and acidic residues. Residues 67–85 (SNGNKNDSNANNNNNNNNK) are compositionally biased toward low complexity. The Zn(2+) site is built by Cys-95, Cys-98, Cys-105, Cys-112, Cys-115, and Cys-122. The zn(2)-C6 fungal-type DNA-binding region spans 95–122 (CDACRKKKWKCSKTVPTCTNCLKYNLDC). Residues 818-840 (LQSSTTQMRPPTTSGWPDTNNFL) form a disordered region.

The protein localises to the nucleus. In terms of biological role, positive regulatory protein, that controls induction of the lactose-galactose regulation of Kluyveromyces lactis. In Kluyveromyces lactis (strain ATCC 8585 / CBS 2359 / DSM 70799 / NBRC 1267 / NRRL Y-1140 / WM37) (Yeast), this protein is Lactose regulatory protein LAC9 (LAC9).